Consider the following 374-residue polypeptide: Alcohol dehydrogenase class-3 (374 aa).

Position 2 is an N-acetylalanine (Ala-2). Zn(2+) contacts are provided by Cys-45, His-67, Cys-97, Cys-100, Cys-103, Cys-111, and Cys-174. N6-succinyllysine is present on Lys-233. Ser-247 is modified (phosphoserine). Lys-315 is subject to N6-succinyllysine. Phosphoserine occurs at positions 324 and 351.

Belongs to the zinc-containing alcohol dehydrogenase family. Class-III subfamily. Homodimer. The cofactor is Zn(2+). In terms of tissue distribution, ubiquitous.

Its subcellular location is the cytoplasm. It catalyses the reaction a primary alcohol + NAD(+) = an aldehyde + NADH + H(+). The enzyme catalyses a secondary alcohol + NAD(+) = a ketone + NADH + H(+). The catalysed reaction is S-(hydroxymethyl)glutathione + NADP(+) = S-formylglutathione + NADPH + H(+). It carries out the reaction S-(hydroxymethyl)glutathione + NAD(+) = S-formylglutathione + NADH + H(+). It catalyses the reaction 20-oxo-(5Z,8Z,11Z,14Z)-eicosatetraenoate + NAD(+) + H2O = (5Z,8Z,11Z,14Z)-eicosatetraenedioate + NADH + 2 H(+). The enzyme catalyses 20-hydroxy-(5Z,8Z,11Z,14Z)-eicosatetraenoate + NAD(+) = 20-oxo-(5Z,8Z,11Z,14Z)-eicosatetraenoate + NADH + H(+). The catalysed reaction is S-nitrosoglutathione + NADH + H(+) = S-(hydroxysulfenamide)glutathione + NAD(+). Functionally, catalyzes the oxidation of long-chain primary alcohols and the oxidation of S-(hydroxymethyl) glutathione. Also oxidizes long chain omega-hydroxy fatty acids, such as 20-HETE, producing both the intermediate aldehyde, 20-oxoarachidonate and the end product, a dicarboxylic acid, (5Z,8Z,11Z,14Z)-eicosatetraenedioate. Class-III ADH is remarkably ineffective in oxidizing ethanol. Required for clearance of cellular formaldehyde, a cytotoxic and carcinogenic metabolite that induces DNA damage. Also acts as a S-nitroso-glutathione reductase by catalyzing the NADH-dependent reduction of S-nitrosoglutathione, thereby regulating protein S-nitrosylation. The protein is Alcohol dehydrogenase class-3 of Mus musculus (Mouse).